A 173-amino-acid polypeptide reads, in one-letter code: Invasion protein B homolog BruAb1_0366 (173 aa).

The first 23 residues, 1 to 23 (MKNYRAIGLAFTFTALSSLSAFA), serve as a signal peptide directing secretion.

It belongs to the IalB family.

This chain is Invasion protein B homolog BruAb1_0366, found in Brucella abortus biovar 1 (strain 9-941).